The primary structure comprises 995 residues: Beta-agarase A (995 aa).

The N-terminal stretch at 1–20 (MKIKFLSAAIAASLALPLSA) is a signal peptide. Positions 936–972 (GTNIGVSHSGPEAPDPGEPVDPPIDPPTPPTGGVTGG) are disordered. Residues 948 to 965 (APDPGEPVDPPIDPPTPP) are compositionally biased toward pro residues.

The protein belongs to the glycosyl hydrolase 50 family.

It catalyses the reaction Hydrolysis of (1-&gt;4)-beta-D-galactosidic linkages in agarose, giving the tetramer as the predominant product.. In terms of biological role, hydrolyzes agarose and also neoagarotetraose to yield neoagarobiose. The polypeptide is Beta-agarase A (agaA) (Vibrio sp. (strain JT0107)).